A 498-amino-acid polypeptide reads, in one-letter code: Putative phosphotransferase 057R (498 aa).

This chain is Putative phosphotransferase 057R, found in Dryophytes versicolor (chameleon treefrog).